Consider the following 715-residue polypeptide: Ribosomal RNA large subunit methyltransferase K/L (715 aa).

The 112-residue stretch at 43-154 (TQYRALLWSR…RDDLVLSLDL (112 aa)) folds into the THUMP domain.

The protein belongs to the methyltransferase superfamily. RlmKL family.

The protein resides in the cytoplasm. The enzyme catalyses guanosine(2445) in 23S rRNA + S-adenosyl-L-methionine = N(2)-methylguanosine(2445) in 23S rRNA + S-adenosyl-L-homocysteine + H(+). The catalysed reaction is guanosine(2069) in 23S rRNA + S-adenosyl-L-methionine = N(2)-methylguanosine(2069) in 23S rRNA + S-adenosyl-L-homocysteine + H(+). Functionally, specifically methylates the guanine in position 2445 (m2G2445) and the guanine in position 2069 (m7G2069) of 23S rRNA. This is Ribosomal RNA large subunit methyltransferase K/L from Mannheimia succiniciproducens (strain KCTC 0769BP / MBEL55E).